Consider the following 513-residue polypeptide: Pleiotropic regulator 1 (513 aa).

Position 1 is an N-acetylmethionine (methionine 1). Residues serine 119 and serine 200 each carry the phosphoserine modification. WD repeat units lie at residues 201-240 (GHLG…LKLS), 243-282 (GHIS…VIRH), 285-324 (GHLS…SVHT), 327-366 (GHTN…TRVT), 369-409 (NHKK…QNLS), 410-448 (GHNA…NFQR), and 459-498 (DSES…TEET). Position 390 is a phosphoserine (serine 390).

The protein belongs to the WD repeat PRL1/PRL2 family. As to quaternary structure, identified in the spliceosome C complex. Component of the PRP19-CDC5L splicing complex composed of a core complex comprising a homotetramer of PRPF19, CDC5L, PLRG1 and BCAS2, and at least three less stably associated proteins CTNNBL1, CWC15 and HSPA8. Interacts (via its WD40 repeat domain) directly with CDC5L (via its C-terminal); the interaction is required for mRNA splicing but not for spliceosome assembly. Component of the minor spliceosome, which splices U12-type introns. Within this complex, interacts with CRIPT. Also interacts directly in the complex with BCAS2 and PRPF19. Interacts with USB1.

The protein localises to the nucleus. Its subcellular location is the nucleus speckle. Functionally, involved in pre-mRNA splicing as component of the spliceosome. Component of the PRP19-CDC5L complex that forms an integral part of the spliceosome and is required for activating pre-mRNA splicing. As a component of the minor spliceosome, involved in the splicing of U12-type introns in pre-mRNAs. The chain is Pleiotropic regulator 1 (PLRG1) from Bos taurus (Bovine).